Here is a 378-residue protein sequence, read N- to C-terminus: Spermidine/putrescine import ATP-binding protein PotA (378 aa).

The 231-residue stretch at 18-248 (VLLSGISKSF…PKNLFVAGFI (231 aa)) folds into the ABC transporter domain. 50-57 (GPSGCGKT) provides a ligand contact to ATP.

This sequence belongs to the ABC transporter superfamily. Spermidine/putrescine importer (TC 3.A.1.11.1) family. In terms of assembly, the complex is composed of two ATP-binding proteins (PotA), two transmembrane proteins (PotB and PotC) and a solute-binding protein (PotD).

The protein resides in the cell inner membrane. It carries out the reaction ATP + H2O + polyamine-[polyamine-binding protein]Side 1 = ADP + phosphate + polyamineSide 2 + [polyamine-binding protein]Side 1.. In terms of biological role, part of the ABC transporter complex PotABCD involved in spermidine/putrescine import. Responsible for energy coupling to the transport system. This Salmonella typhi protein is Spermidine/putrescine import ATP-binding protein PotA.